Here is a 202-residue protein sequence, read N- to C-terminus: Snake venom metalloproteinase atroxlysin-1 (202 aa).

One can recognise a Peptidase M12B domain in the interval 6 to 202 (RYVDLFIVVD…ENPQCILNKR (197 aa)). Positions 9 and 93 each coordinate Ca(2+). Disulfide bonds link C117-C197, C157-C181, and C159-C164. H142 serves as a coordination point for Zn(2+). E143 is a catalytic residue. Positions 146 and 152 each coordinate Zn(2+). Residues C197 and N200 each contribute to the Ca(2+) site.

It belongs to the venom metalloproteinase (M12B) family. P-I subfamily. In terms of assembly, monomer. Zn(2+) serves as cofactor. As to expression, expressed by the venom gland.

It is found in the secreted. Its activity is regulated as follows. Inhibited by EDTA, DTT and high concentrations of zinc ions (&gt;2 mM). Weakly inhibited by TLCK. Not inhibited by PMSF. Activated by calcium ions. Snake venom zinc metalloproteinase that acts on fibrinogen, fibrin, fibronectin (FN1), type I collagen, type IV collagen, integrin alpha-7/beta-1 (ITGA7/ITGB1) and integrin alpha-1/beta-1 (ITGA1/ITGB1). Binds to fibronectin (FN1), fibrinogen and, weakly, to type I collagen and laminin. Cleaves Xaa-Leu bonds. Inhibits ADP- and collagen-induced platelet aggregation both in the presence (IC(50)=1.4 uM for collagen) and in the absence (IC(50)=2.2 uM for collagen) of cofactors. Has hemorrhagic activity. The chain is Snake venom metalloproteinase atroxlysin-1 from Bothrops atrox (Barba amarilla).